The chain runs to 231 residues: Uracil-DNA glycosylase (231 aa).

Asp70 (proton acceptor) is an active-site residue.

It belongs to the uracil-DNA glycosylase (UDG) superfamily. UNG family.

The protein localises to the cytoplasm. It carries out the reaction Hydrolyzes single-stranded DNA or mismatched double-stranded DNA and polynucleotides, releasing free uracil.. In terms of biological role, excises uracil residues from the DNA which can arise as a result of misincorporation of dUMP residues by DNA polymerase or due to deamination of cytosine. This chain is Uracil-DNA glycosylase, found in Pseudomonas fluorescens (strain Pf0-1).